The primary structure comprises 493 residues: Cytochrome P450 710A4 (493 aa).

Residues 5 to 25 (VSLFASLTPYLVSALLLFLLL) form a helical membrane-spanning segment. Cysteine 435 serves as a coordination point for heme.

The protein belongs to the cytochrome P450 family. Requires heme as cofactor. In terms of tissue distribution, very weak expression in roots and root hairs. Not detected in the root tips.

Its subcellular location is the membrane. It catalyses the reaction 5-dehydroepisterol + NADPH + O2 + H(+) = ergosta-5,7,22,24(28)-tetraen-3beta-ol + NADP(+) + 2 H2O. It functions in the pathway steroid biosynthesis; sterol biosynthesis. Required to form the C-22 double bond in the sterol side chain. Possesses C-22 desaturase activity toward beta-sitosterol and produces stigmasterol. The protein is Cytochrome P450 710A4 of Arabidopsis thaliana (Mouse-ear cress).